The chain runs to 139 residues: MVSENEKTRRPKRSIQHRQNKDENNIEIKAVAKFLRASPRKVRSVANTIRGKSVSEAFQVLEMSPKKAARLIEKVLRSAVANAENNANLSSDSLYISRCFVDDGPRYKRIWPRGRGRADIIQRRMCHVTVAVKSIEAKS.

The tract at residues 1-22 is disordered; the sequence is MVSENEKTRRPKRSIQHRQNKD. The span at 9 to 18 shows a compositional bias: basic residues; that stretch reads RRPKRSIQHR.

Belongs to the universal ribosomal protein uL22 family. As to quaternary structure, part of the 50S ribosomal subunit.

This protein binds specifically to 23S rRNA; its binding is stimulated by other ribosomal proteins, e.g. L4, L17, and L20. It is important during the early stages of 50S assembly. It makes multiple contacts with different domains of the 23S rRNA in the assembled 50S subunit and ribosome. In terms of biological role, the globular domain of the protein is located near the polypeptide exit tunnel on the outside of the subunit, while an extended beta-hairpin is found that lines the wall of the exit tunnel in the center of the 70S ribosome. The sequence is that of Large ribosomal subunit protein uL22 from Pseudothermotoga lettingae (strain ATCC BAA-301 / DSM 14385 / NBRC 107922 / TMO) (Thermotoga lettingae).